Consider the following 292-residue polypeptide: Nanos homolog 1 (292 aa).

2 disordered regions span residues 1–41 and 68–121; these read MEAF…QPFS and GGNG…SRGR. Residues 40 to 56 are essential for its translational repressor activity; sequence FSSWNDYLGLATLITKA. Over residues 76 to 87 the composition is skewed to low complexity; it reads PPSSSSSSCCSP. Acidic residues predominate over residues 104 to 115; the sequence is DYDEDDDDDSDE. The Nanos-type zinc-finger motif lies at 213–267; it reads VCVFCRNNKEAMALYTTHILKGPDGRVLCPVLRRYTCPLCGASGDNAHTIKYCPL. The Zn(2+) site is built by Cys214, Cys217, His230, Cys241, Cys249, Cys252, His260, and Cys265. 2 consecutive short sequence motifs (C2HC) follow at residues 214–241 and 249–265; these read CVFC…RVLC and CPLC…IKYC. Residues 268-292 form a disordered region; sequence SKVPPPPARPPPRSARDGPPGKKLR. Over residues 269–280 the composition is skewed to pro residues; it reads KVPPPPARPPPR. Over residues 281-292 the composition is skewed to basic and acidic residues; the sequence is SARDGPPGKKLR.

This sequence belongs to the nanos family. As to quaternary structure, interacts with PUM2, SNAPIN and CTNNB1. Interacts (via N-terminal region) with CTNND1. Interacts with DDX20 (via N-terminal region). In terms of tissue distribution, testis and ovary (at protein level). Predominantly expressed in testis. Specifically expressed during germline development. In adult tissues, it is mainly expressed in spermatogonia, the stem cells of the germline. Also expressed during meiosis in spermatocytes. Not present in late, post-meiotic stage germ cells. Expressed in fetal ovaries, while it is weakly or not expressed in mature postmeiotic oocytes, suggesting that it may be expressed in premeiotic female germ cells. Expressed at high levels only in the E-cadherin deficient cell lines. Highly expressed in lung carcinomas and mostly detected in invasive tumor cells and its expression correlates with tumor aggressiveness.

The protein resides in the cytoplasm. Its subcellular location is the perinuclear region. Its function is as follows. May act as a translational repressor which regulates translation of specific mRNAs by forming a complex with PUM2 that associates with the 3'-UTR of mRNA targets. Capable of interfering with the proadhesive and anti-invasive functions of E-cadherin. Up-regulates the production of MMP14 to promote tumor cell invasion. The sequence is that of Nanos homolog 1 (NANOS1) from Homo sapiens (Human).